Here is a 203-residue protein sequence, read N- to C-terminus: MRTPITTHSLLLLLLLQQLLQPVQLQEVDTDFDSPDDEMEELEEYLEEFQSTGPTRPPTKENVERRVIIEPGMPLYDRDYCNEEIKRKNVYHKYRCVTEHYFLLMQYDELQKICYNRFVPCKNGVRKCNRSKGLVEGVYCNLTEAFEIPRCKYKSFYRRGYVLITCAWQNEIHKLIPHTINDLVEPPKHRSFLNEDGVFVIPP.

Positions 1-25 (MRTPITTHSLLLLLLLQQLLQPVQL) are cleaved as a signal peptide. 3 cysteine pairs are disulfide-bonded: cysteine 96–cysteine 151, cysteine 114–cysteine 166, and cysteine 121–cysteine 128. N-linked (GlcNAc...) asparagine glycosylation is found at asparagine 129 and asparagine 141.

It belongs to the pancreatic ribonuclease family.

Its subcellular location is the secreted. In terms of biological role, does not exhibit any ribonuclease activity. The protein is Inactive ribonuclease-like protein 9 (RNASE9) of Macaca assamensis (Assam macaque).